The sequence spans 154 residues: Superoxide dismutase [Cu-Zn] (154 aa).

Cu cation is bound by residues histidine 47, histidine 49, and histidine 64. A disulfide bond links cysteine 58 and cysteine 147. 4 residues coordinate Zn(2+): histidine 64, histidine 72, histidine 81, and aspartate 84. Histidine 121 lines the Cu cation pocket. The segment at 122–143 (GGTDDLGKGGNEESLKTGNAGP) is disordered. Over residues 123-136 (GTDDLGKGGNEESL) the composition is skewed to basic and acidic residues. Arginine 144 is a substrate binding site.

The protein belongs to the Cu-Zn superoxide dismutase family. In terms of assembly, homodimer. It depends on Cu cation as a cofactor. Zn(2+) is required as a cofactor.

The protein resides in the cytoplasm. The catalysed reaction is 2 superoxide + 2 H(+) = H2O2 + O2. Its function is as follows. Destroys radicals which are normally produced within the cells and which are toxic to biological systems. The chain is Superoxide dismutase [Cu-Zn] (SOD1) from Cordyceps militaris (Caterpillar fungus).